The chain runs to 329 residues: Serpentine receptor class alpha-8 (329 aa).

Helical transmembrane passes span valine 26–leucine 46, phenylalanine 60–isoleucine 80, isoleucine 141–leucine 161, threonine 187–leucine 207, valine 231–isoleucine 251, and phenylalanine 273–isoleucine 293.

Belongs to the nematode receptor-like protein sra family.

It is found in the membrane. The polypeptide is Serpentine receptor class alpha-8 (sra-8) (Caenorhabditis elegans).